Consider the following 594-residue polypeptide: Actin-histidine N-methyltransferase (594 aa).

The disordered stretch occupies residues 1–22 (MGKKSRVKTQKSGTGATATVSP). Residues 10–20 (QKSGTGATATV) show a composition bias toward polar residues. S-adenosyl-L-methionine contacts are provided by residues Arg75, 104-106 (EGF), Arg254, 275-279 (DMCNH), and 325-327 (SGF). An SET domain is found at 94-314 (EGFEMVNFKE…AGEQIYIFYG (221 aa)). Residue Ser513 is modified to Phosphoserine. Residues 549-594 (ENGLVNGENSIPNGTRSENESLNQESKRAVEDAKGSSSDSTAGVKE) are disordered. The span at 555 to 572 (GENSIPNGTRSENESLNQ) shows a compositional bias: polar residues. Basic and acidic residues predominate over residues 573–582 (ESKRAVEDAK). Residues 583–594 (GSSSDSTAGVKE) are compositionally biased toward polar residues.

This sequence belongs to the class V-like SAM-binding methyltransferase superfamily. SETD3 actin-histidine methyltransferase family. As to quaternary structure, interacts with MYOD1. Post-translationally, phosphorylated by GSK3B, which is required for recognition by the SCF(FBXW7) complex and subsequent degradation. Ubiquitinated by the SCF(FBXW7) complex following phosphorylation by GSK3B, leading to its degradation by the proteasome.

Its subcellular location is the cytoplasm. The protein localises to the nucleus. It catalyses the reaction L-histidyl-[protein] + S-adenosyl-L-methionine = N(tele)-methyl-L-histidyl-[protein] + S-adenosyl-L-homocysteine + H(+). Protein-histidine N-methyltransferase that specifically mediates 3-methylhistidine (tele-methylhistidine) methylation of actin at 'His-73'. Histidine methylation of actin is required for smooth muscle contraction of the laboring uterus during delivery. Does not have protein-lysine N-methyltransferase activity and probably only catalyzes histidine methylation of actin. In Homo sapiens (Human), this protein is Actin-histidine N-methyltransferase.